A 65-amino-acid chain; its full sequence is Small ribosomal subunit protein eS27 (65 aa).

Zn(2+) is bound by residues Cys-20, Cys-23, Cys-39, and Cys-42. A C4-type zinc finger spans residues 20–42 (CIDCGNEQIVFSHPATRVRCNVC).

The protein belongs to the eukaryotic ribosomal protein eS27 family. In terms of assembly, part of the 30S ribosomal subunit. The cofactor is Zn(2+).

The sequence is that of Small ribosomal subunit protein eS27 from Pyrococcus abyssi (strain GE5 / Orsay).